The primary structure comprises 331 residues: Type 2 lactosamine alpha-2,3-sialyltransferase (331 aa).

Residues 1 to 4 (MRGY) lie on the Cytoplasmic side of the membrane. Residues 5–25 (LVAIFLSAVFLYYVLHCILWG) form a helical; Signal-anchor for type II membrane protein membrane-spanning segment. Over 26–331 (TNVYWAAPVE…KNLVINLTQD (306 aa)) the chain is Lumenal. N-linked (GlcNAc...) asparagine glycosylation is found at asparagine 129, asparagine 181, asparagine 282, asparagine 295, asparagine 308, and asparagine 327.

Belongs to the glycosyltransferase 29 family.

The protein localises to the golgi apparatus membrane. The enzyme catalyses a neolactoside nLc4Cer(d18:1(4E)) + CMP-N-acetyl-beta-neuraminate = a neolactoside IV(3)-alpha-NeuAc-nLc4Cer(d18:1(4E)) + CMP + H(+). The catalysed reaction is a beta-D-galactosyl-(1-&gt;4)-N-acetyl-beta-D-glucosaminyl derivative + CMP-N-acetyl-beta-neuraminate = an N-acetyl-alpha-neuraminyl-(2-&gt;3)-beta-D-galactosyl-(1-&gt;4)-N-acetyl-beta-D-glucosaminyl derivative + CMP + H(+). It carries out the reaction a neolactoside nLc6Cer(d18:1(4E)) + CMP-N-acetyl-beta-neuraminate = a neolactoside VI(3)-alpha-NeuNAc-nLc6Cer(d18:1(4E)) + CMP + H(+). Functionally, transfers the sialyl residue from CMP-N-acetyl-beta-neuraminate to the terminal galactose residue on sugar chains of glycoproteins and glycolipids. It's alpha-2,3-sialyltransferase activity is specific toward type II glycan chains (Galbeta1-4GlcNAc) on glycoproteins and glycolipids such as neolactosides nLc4Cer and nLc6Cer, whose sialyl-products serve as precursors for the Lewis X antigen. Critically involved in the synthesis of functional selectin ligands needed for neutrophil recruitment during inflammation and lymphocyte homing to the lymph nodes. The protein is Type 2 lactosamine alpha-2,3-sialyltransferase (ST3GAL6) of Pongo abelii (Sumatran orangutan).